Here is a 239-residue protein sequence, read N- to C-terminus: Cysteine-rich venom protein 2 (239 aa).

The first 19 residues, 1–19 (MIALIVLPILAAVLQQSSG), serve as a signal peptide directing secretion. In terms of domain architecture, SCP spans 38-166 (VDLHNSLRRS…EYSYFYVCQY (129 aa)). 7 cysteine pairs are disulfide-bonded: Cys75–Cys153, Cys92–Cys167, Cys148–Cys164, Cys186–Cys193, Cys189–Cys198, Cys202–Cys234, and Cys219–Cys232. Residues 198–234 (CTNPCPKKISTQLPRFGPQAGCQDKQMQSDCSATCFC) enclose the ShKT domain.

It belongs to the CRISP family. As to expression, expressed by the venom gland.

It localises to the secreted. In terms of biological role, weakly blocks contraction of smooth muscle elicited by high potassium-induced depolarization, but does not block caffeine-stimulated contraction. May target voltage-gated calcium channels on smooth muscle. The sequence is that of Cysteine-rich venom protein 2 from Sistrurus catenatus edwardsii (Desert massasauga).